A 145-amino-acid chain; its full sequence is MSQKAIKGYINLIIPAGGATPAPPIGPALGQRKVNIKTFCDEFNNSTKDTEKGVPLPTLITVYEDSSFSFKIKTPPASYFLKKYARITKGSSATKKEAVVGKVTMDDCREIAKLKMPDLNTKDIEAATKIICGSAASIGLEVVGN.

It belongs to the universal ribosomal protein uL11 family. In terms of assembly, part of the ribosomal stalk of the 50S ribosomal subunit. Interacts with L10 and the large rRNA to form the base of the stalk. L10 forms an elongated spine to which L12 dimers bind in a sequential fashion forming a multimeric L10(L12)X complex. In terms of processing, one or more lysine residues are methylated.

Its function is as follows. Forms part of the ribosomal stalk which helps the ribosome interact with GTP-bound translation factors. The chain is Large ribosomal subunit protein uL11 from Rickettsia felis (strain ATCC VR-1525 / URRWXCal2) (Rickettsia azadi).